The primary structure comprises 416 residues: Enterobactin exporter EntS (416 aa).

At 1-21 (MNKQSWLLNLSLLKTHPAFRA) the chain is on the cytoplasmic side. The helical transmembrane segment at 22 to 42 (VFLARFISIVSLGLLGVAVPV) threads the bilayer. Over 43–55 (QIQMMTHSTWQVG) the chain is Periplasmic. A helical transmembrane segment spans residues 56–76 (LSVTLTGGAMFVGLMVGGVLA). The Cytoplasmic portion of the chain corresponds to 77 to 83 (DRYERKK). The chain crosses the membrane as a helical span at residues 84-104 (VILLARGTCGIGFIGLCLNAL). Residues 105–109 (LPEPS) lie on the Periplasmic side of the membrane. Residues 110–130 (LLAIYLLGLWDGFFASLGVTA) form a helical membrane-spanning segment. Topologically, residues 131–156 (LLAATPALVGRENLMQAGAITMLTVR) are cytoplasmic. A helical membrane pass occupies residues 157 to 177 (LGSVISPMIGGLLLATGGVAW). Residue N178 is a topological domain, periplasmic. Residues 179–199 (YGLAAAGTFITLLPLLSLPAL) traverse the membrane as a helical segment. Topologically, residues 200-218 (PPPPQPREHPLKSLLAGFR) are cytoplasmic. A helical membrane pass occupies residues 219–239 (FLLASPLVGGIALLGGLLTMA). Topologically, residues 240–256 (SAVRVLYPALADNWQMS) are periplasmic. Residues 257 to 277 (AAQIGFLYAAIPLGAAIGALT) form a helical membrane-spanning segment. The Cytoplasmic segment spans residues 278 to 287 (SGKLAHSARP). Residues 288–307 (GLLMLLSTLGSFLAIGLFGL) form a helical membrane-spanning segment. Residues 308–313 (MPMWIL) lie on the Periplasmic side of the membrane. A helical transmembrane segment spans residues 314–336 (GVVCLALFGWLSAVSSLLQYTML). The Cytoplasmic portion of the chain corresponds to 337 to 356 (QTQTPEAMLGRINGLWTAQN). The helical transmembrane segment at 357–377 (VTGDAIGAALLGGLGAMMTPV) threads the bilayer. Position 378 (A378) is a topological domain, periplasmic. The chain crosses the membrane as a helical span at residues 379–399 (SASASGFGLLIIGVLLLLVLV). The Cytoplasmic portion of the chain corresponds to 400–416 (ELRRFRQTPPQMTASDS).

The protein belongs to the major facilitator superfamily. EntS (TC 2.A.1.38) family.

It is found in the cell inner membrane. Functionally, component of an export pathway for enterobactin. The sequence is that of Enterobactin exporter EntS from Escherichia coli O7:K1 (strain IAI39 / ExPEC).